The primary structure comprises 250 residues: 2,3-bisphosphoglycerate-dependent phosphoglycerate mutase (250 aa).

Residues 8 to 15 (RHGESQWN), 21 to 22 (TG), R60, 87 to 90 (ERHY), K98, 114 to 115 (RR), and 183 to 184 (GN) contribute to the substrate site. The active-site Tele-phosphohistidine intermediate is the H9. E87 functions as the Proton donor/acceptor in the catalytic mechanism.

It belongs to the phosphoglycerate mutase family. BPG-dependent PGAM subfamily. In terms of assembly, homodimer.

The catalysed reaction is (2R)-2-phosphoglycerate = (2R)-3-phosphoglycerate. The protein operates within carbohydrate degradation; glycolysis; pyruvate from D-glyceraldehyde 3-phosphate: step 3/5. Functionally, catalyzes the interconversion of 2-phosphoglycerate and 3-phosphoglycerate. This is 2,3-bisphosphoglycerate-dependent phosphoglycerate mutase from Bordetella petrii (strain ATCC BAA-461 / DSM 12804 / CCUG 43448).